A 554-amino-acid chain; its full sequence is 3-(3-hydroxy-phenyl)propionate/3-hydroxycinnamic acid hydroxylase (554 aa).

Residues 17–46 (QVAIAGAGPVGLMMANYLGQMGIDVLVVEK) and 285–295 (FRIDRVLLAGD) contribute to the FAD site.

It belongs to the PheA/TfdB FAD monooxygenase family. The cofactor is FAD.

It carries out the reaction 3-(3-hydroxyphenyl)propanoate + NADH + O2 + H(+) = 3-(2,3-dihydroxyphenyl)propanoate + NAD(+) + H2O. The enzyme catalyses (2E)-3-(3-hydroxyphenyl)prop-2-enoate + NADH + O2 + H(+) = (2E)-3-(2,3-dihydroxyphenyl)prop-2-enoate + NAD(+) + H2O. Its pathway is aromatic compound metabolism; 3-phenylpropanoate degradation. Catalyzes the insertion of one atom of molecular oxygen into position 2 of the phenyl ring of 3-(3-hydroxyphenyl)propionate (3-HPP) and hydroxycinnamic acid (3HCI). The sequence is that of 3-(3-hydroxy-phenyl)propionate/3-hydroxycinnamic acid hydroxylase from Escherichia coli (strain 55989 / EAEC).